A 193-amino-acid chain; its full sequence is Putative anthranilate synthase component II (193 aa).

The 192-residue stretch at 2–193 folds into the Glutamine amidotransferase type-1 domain; that stretch reads KLLIINNHDS…WLAIPPTTNP (192 aa). Active-site residues include cysteine 78, histidine 168, and glutamate 170.

In terms of assembly, tetramer of two components I and two components II.

The catalysed reaction is chorismate + L-glutamine = anthranilate + pyruvate + L-glutamate + H(+). The protein operates within amino-acid biosynthesis; L-tryptophan biosynthesis; L-tryptophan from chorismate: step 1/5. The polypeptide is Putative anthranilate synthase component II (Haemophilus influenzae (strain ATCC 51907 / DSM 11121 / KW20 / Rd)).